The following is a 249-amino-acid chain: Carbohydrate deacetylase (249 aa).

Positions 60 and 125 each coordinate Mg(2+).

Belongs to the YdjC deacetylase family. In terms of assembly, homodimer. The cofactor is Mg(2+).

In terms of biological role, probably catalyzes the deacetylation of acetylated carbohydrates an important step in the degradation of oligosaccharides. This is Carbohydrate deacetylase from Thermoanaerobacter pseudethanolicus (strain ATCC 33223 / 39E) (Clostridium thermohydrosulfuricum).